Here is a 247-residue protein sequence, read N- to C-terminus: MTHTLILLRHGESEWNAKNLFTGWVDVNLTEKGRAEAVRGGELMREAGVLPDVVHTSVQRRAINTACLALDAADRHWIPVRRSWRLNERHYGALQGKNKKETLEAYGEEQFMLWRRSFDVPPPPIEEDSEFSQFGLPQYAGLGDDMPHTECLKDVIARFLPYWESDIVPDLRAGHTVLIAAHGNSLRALVKHLDGISDEDIAGLNIPTGMPLVYELDDDFRPTVPHGRYLDPEAAAAAAAAVANQGR.

Substrate is bound by residues 9–16 (RHGESEWN), 22–23 (TG), arginine 61, 88–91 (ERHY), lysine 99, 115–116 (RR), and 183–184 (GN). Catalysis depends on histidine 10, which acts as the Tele-phosphohistidine intermediate. Glutamate 88 (proton donor/acceptor) is an active-site residue.

The protein belongs to the phosphoglycerate mutase family. BPG-dependent PGAM subfamily.

The enzyme catalyses (2R)-2-phosphoglycerate = (2R)-3-phosphoglycerate. The protein operates within carbohydrate degradation; glycolysis; pyruvate from D-glyceraldehyde 3-phosphate: step 3/5. Catalyzes the interconversion of 2-phosphoglycerate and 3-phosphoglycerate. This chain is 2,3-bisphosphoglycerate-dependent phosphoglycerate mutase, found in Nocardioides sp. (strain ATCC BAA-499 / JS614).